The primary structure comprises 199 residues: Imidazoleglycerol-phosphate dehydratase (199 aa).

It belongs to the imidazoleglycerol-phosphate dehydratase family.

It is found in the cytoplasm. It carries out the reaction D-erythro-1-(imidazol-4-yl)glycerol 3-phosphate = 3-(imidazol-4-yl)-2-oxopropyl phosphate + H2O. It functions in the pathway amino-acid biosynthesis; L-histidine biosynthesis; L-histidine from 5-phospho-alpha-D-ribose 1-diphosphate: step 6/9. This is Imidazoleglycerol-phosphate dehydratase from Lactococcus lactis subsp. cremoris (strain MG1363).